A 427-amino-acid chain; its full sequence is F-box protein At2g16450 (427 aa).

One can recognise an F-box domain in the interval methionine 1–leucine 45.

The chain is F-box protein At2g16450 from Arabidopsis thaliana (Mouse-ear cress).